Here is a 427-residue protein sequence, read N- to C-terminus: Serine--tRNA ligase (427 aa).

231 to 233 is a binding site for L-serine; sequence TAE. 262-264 provides a ligand contact to ATP; the sequence is RSE. Glutamate 285 contacts L-serine. Residue 349–352 participates in ATP binding; sequence EISS. Serine 385 provides a ligand contact to L-serine.

The protein belongs to the class-II aminoacyl-tRNA synthetase family. Type-1 seryl-tRNA synthetase subfamily. As to quaternary structure, homodimer. The tRNA molecule binds across the dimer.

Its subcellular location is the cytoplasm. It carries out the reaction tRNA(Ser) + L-serine + ATP = L-seryl-tRNA(Ser) + AMP + diphosphate + H(+). It catalyses the reaction tRNA(Sec) + L-serine + ATP = L-seryl-tRNA(Sec) + AMP + diphosphate + H(+). It functions in the pathway aminoacyl-tRNA biosynthesis; selenocysteinyl-tRNA(Sec) biosynthesis; L-seryl-tRNA(Sec) from L-serine and tRNA(Sec): step 1/1. Catalyzes the attachment of serine to tRNA(Ser). Is also able to aminoacylate tRNA(Sec) with serine, to form the misacylated tRNA L-seryl-tRNA(Sec), which will be further converted into selenocysteinyl-tRNA(Sec). The protein is Serine--tRNA ligase of Brucella melitensis biotype 2 (strain ATCC 23457).